Here is an 860-residue protein sequence, read N- to C-terminus: Pentatricopeptide repeat-containing protein At1g18900 (860 aa).

PPR repeat units follow at residues 363-397, 398-432, 433-467, 468-502, 503-537, 538-572, 573-607, and 608-642; these read DGHTYTTMVGNLGRAKQFGAINKLLDEMVRDGCQP, NTVTYNRLIHSYGRANYLNEAMNVFNQMQEAGCKP, DRVTYCTLIDIHAKAGFLDIAMDMYQRMQAGGLSP, DTFTYSVIINCLGKAGHLPAAHKLFCEMVDQGCTP, NLVTYNIMMDLHAKARNYQNALKLYRDMQNAGFEP, DKVTYSIVMEVLGHCGYLEEAEAVFTEMQQKNWIP, DEPVYGLLVDLWGKAGNVEKAWQWYQAMLHAGLRP, and NVPTCNSLLSTFLRVNKIAEAYELLQNMLALGLRP. Positions 760–843 constitute a Smr domain; that stretch reads INLHVMSEGT…NSGCFVGSGE (84 aa).

It belongs to the PPR family. P subfamily.

This Arabidopsis thaliana (Mouse-ear cress) protein is Pentatricopeptide repeat-containing protein At1g18900.